Consider the following 460-residue polypeptide: Photosystem II CP43 reaction center protein (460 aa).

The Cytoplasmic segment spans residues 1–35; the sequence is MVTLSNTSMVGGRDLPSTGFAWWSGNARLINLSGK. The chain crosses the membrane as a helical span at residues 36–58; that stretch reads LLGAHVAHAGLIVFWAGAMTLFE. At 59 to 98 the chain is on the lumenal, thylakoid side; that stretch reads VAHFIPEKPMYEQGLILLPHIATLGWGVGPAGEVTDIFPF. Residues 99 to 121 form a helical membrane-spanning segment; that stretch reads FVVGVLHLISSAVLGLGGIYHAL. The Cytoplasmic segment spans residues 122–142; sequence RGPEVLEEYSSFFGYDWKDKN. Residues 143 to 165 traverse the membrane as a helical segment; the sequence is QMTNIIGYHLILLGCGALLLVFK. Topologically, residues 166 to 220 are lumenal, thylakoid; that stretch reads AMFFGGVYDTWAPGGGDVRVITNPTLNPAIIFGYLLKAPFGGEGWIISVNNMEDI. A helical transmembrane segment spans residues 221 to 240; the sequence is IGGHIWIGLICISGGIWHIL. Over 241–255 the chain is Cytoplasmic; it reads TKPFGWARRALIWSG. Residues 256–276 traverse the membrane as a helical segment; the sequence is EAYLSYSLGALSLMGFIASVF. Residues 277 to 411 lie on the Lumenal, thylakoid side of the membrane; sequence VWFNNTAYPS…NSFNYVSPRA (135 aa). Residues E341 and R344 each contribute to the [CaMn4O5] cluster site. A helical membrane pass occupies residues 412 to 436; sequence WLATSHFVLGFFFLVGHLWHAGRAR. The Cytoplasmic segment spans residues 437-460; it reads AAAAGFEKGIDRETEPTLFMPDLD.

This sequence belongs to the PsbB/PsbC family. PsbC subfamily. PSII is composed of 1 copy each of membrane proteins PsbA, PsbB, PsbC, PsbD, PsbE, PsbF, PsbH, PsbI, PsbJ, PsbK, PsbL, PsbM, PsbT, PsbX, PsbY, PsbZ, Psb30/Ycf12, peripheral proteins PsbO, CyanoQ (PsbQ), PsbU, PsbV and a large number of cofactors. It forms dimeric complexes. The cofactor is Binds multiple chlorophylls and provides some of the ligands for the Ca-4Mn-5O cluster of the oxygen-evolving complex. It may also provide a ligand for a Cl- that is required for oxygen evolution. PSII binds additional chlorophylls, carotenoids and specific lipids..

It is found in the cellular thylakoid membrane. One of the components of the core complex of photosystem II (PSII). PSII binds chlorophyll and helps catalyze the primary light-induced photochemical processes of PSII. PSII is a light-driven water:plastoquinone oxidoreductase, using light energy to abstract electrons from H(2)O, generating O(2) and a proton gradient subsequently used for ATP formation. Required for correct assembly of PSII. The chain is Photosystem II CP43 reaction center protein from Synechocystis sp. (strain ATCC 27184 / PCC 6803 / Kazusa).